Here is a 61-residue protein sequence, read N- to C-terminus: Large ribosomal subunit protein uL30 (61 aa).

Belongs to the universal ribosomal protein uL30 family. Part of the 50S ribosomal subunit.

The polypeptide is Large ribosomal subunit protein uL30 (Fervidobacterium nodosum (strain ATCC 35602 / DSM 5306 / Rt17-B1)).